Consider the following 721-residue polypeptide: Solute carrier family 12 member 8 (721 aa).

A run of 11 helical transmembrane segments spans residues 53–73 (FGTWDGVFTSCMINIFGVVLF), 84–104 (GVLLGIVLVSFVILVALVTVL), 115–135 (IGSGGVYSMVSTVLGGKVGGT), 136–156 (IGVLYIFGQCVAGAMYITGFA), 174–194 (ISLAVLVGLLGINLAGVKWII), 196–216 (LQLLLFLLLAVSTLDFVIGSF), 247–267 (FFTVFGVFFPAATGVMVGFNM), 283–303 (LAAIGTSWFLYVVFVFLLGAI), 321–341 (LVGGLFLLGLYISSLASCMGG), 374–394 (PVAAIFITGLLTMAFVFIGQV), and 397–417 (LAPIVTINFMLTYSAVDYSYF). 2 disordered regions span residues 473–505 (PNHTEAPESTSSQEKDPKMFKFSKPRKPAKQTL) and 533–580 (NESQ…STVA). Residues 553 to 565 (TESDEPDSEEDVD) are compositionally biased toward acidic residues. 2 helical membrane-spanning segments follow: residues 606–626 (FLGAILSIVIMFVIQWIYALV) and 628–648 (LGVAIILYLYIGRVNPGLNPG).

It belongs to the SLC12A transporter family.

The protein localises to the membrane. Its function is as follows. Cation/chloride cotransporter. The sequence is that of Solute carrier family 12 member 8 (slc12a8) from Xenopus laevis (African clawed frog).